The chain runs to 1070 residues: DNA-directed RNA polymerase subunit beta (1070 aa).

The protein belongs to the RNA polymerase beta chain family. In terms of assembly, in plastids the minimal PEP RNA polymerase catalytic core is composed of four subunits: alpha, beta, beta', and beta''. When a (nuclear-encoded) sigma factor is associated with the core the holoenzyme is formed, which can initiate transcription.

It localises to the plastid. Its subcellular location is the chloroplast. It catalyses the reaction RNA(n) + a ribonucleoside 5'-triphosphate = RNA(n+1) + diphosphate. DNA-dependent RNA polymerase catalyzes the transcription of DNA into RNA using the four ribonucleoside triphosphates as substrates. This is DNA-directed RNA polymerase subunit beta from Cucumis sativus (Cucumber).